Reading from the N-terminus, the 151-residue chain is UPF0208 membrane protein YfbV (151 aa).

Transmembrane regions (helical) follow at residues 46 to 65 (YAIRFMPPVAVFTLCWQIAL) and 69 to 91 (LGPAVATALFALSLPMQGLWWLG).

The protein belongs to the UPF0208 family.

The protein resides in the cell inner membrane. The sequence is that of UPF0208 membrane protein YfbV from Salmonella choleraesuis (strain SC-B67).